The following is a 258-amino-acid chain: Probable F-box protein At2g29610 (258 aa).

The interval 1 to 25 (MVELSEIPGDPNGADPNNNPQEEDE) is disordered. The span at 8–20 (PGDPNGADPNNNP) shows a compositional bias: low complexity. The F-box domain occupies 28–74 (LPILLQLPEELIERIIAHFPQCYSPSPILVCETFRQVINSDHFYYVT).

The sequence is that of Probable F-box protein At2g29610 from Arabidopsis thaliana (Mouse-ear cress).